The following is a 620-amino-acid chain: MYGRDPWGGPLEINAADSMTDDDRSRNLQDLDRATPSRPLDETQQSWLLGPKVLKKKKYVDLGCILVSRKIFLWTLGTIVVTALLSGFITLIVKTLPHHHHKEPPPDNYTIALRTALKFFNAQQSGKLPKNIYNVSWRHDSCLQDGKGDPGQCYKDLVGGYYDAGDSIKFNFPMSYAMTMLSWSVIEYSAKYQAAGELEHVKELIKWGTDYFLKTFNSSADNIYVMVEQVGSGVSGRGSELHNDHYCWMRPEDIHYKRTVSQCYSSCSDLAAEMAAALASASIVFKDNRLYSKNLVHGAKTLYRFATTSRNRYSQNGKESSKFYNSSMFEDELLWGGAWLYYATGNVTYLERVTSHHMAEKAGAFGNSPYYGVFSWDNKLPGAQLLLTRMRLFLSPGYPYEDMLSEFHNQTGRVMCSYLPYYKKFNRTNGGLIQLNHGAPQPLQYVANAAFLAALFSDYLEAADTPGWYCGPNFYTTEFLRNFSRSQIDYILGKNPRKMSYVVGYGQRYPKQVHHRGASIPKNMKETCTGGFKWKKSKKNNPNAINGAMVAGPDKHDGFHDIRTNYNYTEPTLAGNAGLVAALVALSGEKAVGGIDKNTMFSAVPPLVMATPPPPAPWTP.

A disordered region spans residues 1–39; that stretch reads MYGRDPWGGPLEINAADSMTDDDRSRNLQDLDRATPSRP. Residues 1-70 are Cytoplasmic-facing; sequence MYGRDPWGGP…DLGCILVSRK (70 aa). A compositionally biased stretch (basic and acidic residues) spans 21–39; sequence DDDRSRNLQDLDRATPSRP. A helical; Signal-anchor for type II membrane protein transmembrane segment spans residues 71–91; that stretch reads IFLWTLGTIVVTALLSGFITL. Residues 92–620 lie on the Extracellular side of the membrane; the sequence is IVKTLPHHHH…TPPPPAPWTP (529 aa). N-linked (GlcNAc...) asparagine glycans are attached at residues N108 and N134. D166 functions as the Nucleophile in the catalytic mechanism. 6 N-linked (GlcNAc...) asparagine glycosylation sites follow: N217, N325, N346, N409, N426, and N482. Catalysis depends on residues H514 and D561. A glycan (N-linked (GlcNAc...) asparagine) is linked at N567. E570 is a catalytic residue.

This sequence belongs to the glycosyl hydrolase 9 (cellulase E) family. As to expression, expressed in conductive tissues of young roots, cotyledons, rosette leaves, cauline leaves and sepals. Expressed in the leaf trichome support cells.

Its subcellular location is the cell membrane. The catalysed reaction is Endohydrolysis of (1-&gt;4)-beta-D-glucosidic linkages in cellulose, lichenin and cereal beta-D-glucans.. This chain is Endoglucanase 21 (KOR3), found in Arabidopsis thaliana (Mouse-ear cress).